A 273-amino-acid chain; its full sequence is ATP synthase subunit a (273 aa).

The next 7 helical transmembrane spans lie at 41-61 (ILNI…LLIF), 101-121 (LIAP…LMDL), 122-142 (LAVD…ALRV), 143-163 (VPSA…ILII), 183-203 (PFNH…SLLS), 221-241 (LVFI…ISVP), and 247-267 (IIVI…YIAM).

It belongs to the ATPase A chain family. As to quaternary structure, F-type ATPases have 2 components, CF(1) - the catalytic core - and CF(0) - the membrane proton channel. CF(1) has five subunits: alpha(3), beta(3), gamma(1), delta(1), epsilon(1). CF(0) has three main subunits: a(1), b(2) and c(9-12). The alpha and beta chains form an alternating ring which encloses part of the gamma chain. CF(1) is attached to CF(0) by a central stalk formed by the gamma and epsilon chains, while a peripheral stalk is formed by the delta and b chains.

The protein localises to the cell membrane. Its function is as follows. Key component of the proton channel; it plays a direct role in the translocation of protons across the membrane. The polypeptide is ATP synthase subunit a (Baumannia cicadellinicola subsp. Homalodisca coagulata).